The following is a 701-amino-acid chain: Nucleolar transcription factor 1-B (701 aa).

Residues 1-21 (MNGAAGGDTQGKMTAPKDQDQ) form a disordered region. 5 DNA-binding regions (HMG box) span residues 112–180 (PKKP…AKFR), 196–264 (PEKP…REYM), 298–362 (TKPP…MRFL), 422–489 (PETP…SDMR), and 508–574 (KKAP…DTWM). Residues 382 to 426 (MKRKRTNTPASKMATEDAAKVKSRSGQADKKKAAEERAKLPETPK) form a disordered region. Residues 408-426 (QADKKKAAEERAKLPETPK) are compositionally biased toward basic and acidic residues. The disordered stretch occupies residues 584–701 (AYKEQNTNKR…SADSSDSDSN (118 aa)). A compositionally biased stretch (polar residues) spans 597–612 (TKIQAPSSKSKLVIQS). Acidic residues predominate over residues 615-682 (DDDEDDEDDE…DNEEDDDDNE (68 aa)). Over residues 683–695 (SGSSSSSSSSADS) the composition is skewed to low complexity.

In terms of assembly, XUBF consists of 2 polypeptides of 82 and 85 kDa, encoded by the same or closely related genes.

It is found in the nucleus. In terms of biological role, UBF recognizes the ribosomal RNA gene promotor and activates transcription mediated by RNA polymerase I through cooperative interactions with the species-specific factor SL1. It binds specifically to the upstream control element. The protein is Nucleolar transcription factor 1-B (ubtf-b) of Xenopus laevis (African clawed frog).